Reading from the N-terminus, the 235-residue chain is Small ribosomal subunit protein eS6 (235 aa).

Positions 190 to 212 are disordered; that stretch reads GFHPRERGERRRKSVRGRMIPDP.

The protein belongs to the eukaryotic ribosomal protein eS6 family.

The sequence is that of Small ribosomal subunit protein eS6 from Aeropyrum pernix (strain ATCC 700893 / DSM 11879 / JCM 9820 / NBRC 100138 / K1).